Here is a 530-residue protein sequence, read N- to C-terminus: uncharacterized protein (530 aa).

This is an uncharacterized protein from Leptospira interrogans serogroup Icterohaemorrhagiae serovar Lai (strain 56601).